We begin with the raw amino-acid sequence, 238 residues long: Small ribosomal subunit protein uS2c (238 aa).

The protein belongs to the universal ribosomal protein uS2 family.

The protein resides in the plastid. Its subcellular location is the chloroplast. The chain is Small ribosomal subunit protein uS2c (rps2) from Nuphar advena (Common spatterdock).